Consider the following 308-residue polypeptide: Probable manganese-dependent inorganic pyrophosphatase (308 aa).

Residues His9, Asp13, Asp15, Asp75, His97, and Asp149 each contribute to the Mn(2+) site.

The protein belongs to the PPase class C family. The cofactor is Mn(2+).

It is found in the cytoplasm. The catalysed reaction is diphosphate + H2O = 2 phosphate + H(+). The protein is Probable manganese-dependent inorganic pyrophosphatase of Staphylococcus carnosus (strain TM300).